We begin with the raw amino-acid sequence, 282 residues long: MEIILAKRAGFCFGVKRATQMAFEAAEKEGKTYSLGPIIHSPQVVHRLEEMGVKVLKGLGEITDGTIIVRSHGVTSEELEEAVRKELEVVDATCPFVKKAQENVQNLSEAGYEVVVVGDADHPEVQGIVSYAKGKVCVVGSEEEAARLPKMKKIGIVAQTTQSFDNLKHVVLECLRKGAEIRIFNTICDATAVRQQEATALARTVDCMIVIGGYNSANTKRLAEVCAELQPRTHQIETAQEINPAWFEGVAKVGVTAGASTPKWLIDEVIERIREIDSAKTS.

Residue Cys-12 participates in [4Fe-4S] cluster binding. 2 residues coordinate (2E)-4-hydroxy-3-methylbut-2-enyl diphosphate: His-40 and His-72. The dimethylallyl diphosphate site is built by His-40 and His-72. Isopentenyl diphosphate is bound by residues His-40 and His-72. Cys-94 lines the [4Fe-4S] cluster pocket. Residue His-122 coordinates (2E)-4-hydroxy-3-methylbut-2-enyl diphosphate. His-122 contacts dimethylallyl diphosphate. His-122 provides a ligand contact to isopentenyl diphosphate. Catalysis depends on Glu-124, which acts as the Proton donor. Thr-160 serves as a coordination point for (2E)-4-hydroxy-3-methylbut-2-enyl diphosphate. Cys-188 lines the [4Fe-4S] cluster pocket. (2E)-4-hydroxy-3-methylbut-2-enyl diphosphate-binding residues include Ser-216, Asn-218, and Ser-260. Dimethylallyl diphosphate is bound by residues Ser-216, Asn-218, and Ser-260. Ser-216, Asn-218, and Ser-260 together coordinate isopentenyl diphosphate.

It belongs to the IspH family. [4Fe-4S] cluster serves as cofactor.

The enzyme catalyses isopentenyl diphosphate + 2 oxidized [2Fe-2S]-[ferredoxin] + H2O = (2E)-4-hydroxy-3-methylbut-2-enyl diphosphate + 2 reduced [2Fe-2S]-[ferredoxin] + 2 H(+). It catalyses the reaction dimethylallyl diphosphate + 2 oxidized [2Fe-2S]-[ferredoxin] + H2O = (2E)-4-hydroxy-3-methylbut-2-enyl diphosphate + 2 reduced [2Fe-2S]-[ferredoxin] + 2 H(+). The protein operates within isoprenoid biosynthesis; dimethylallyl diphosphate biosynthesis; dimethylallyl diphosphate from (2E)-4-hydroxy-3-methylbutenyl diphosphate: step 1/1. It functions in the pathway isoprenoid biosynthesis; isopentenyl diphosphate biosynthesis via DXP pathway; isopentenyl diphosphate from 1-deoxy-D-xylulose 5-phosphate: step 6/6. Functionally, catalyzes the conversion of 1-hydroxy-2-methyl-2-(E)-butenyl 4-diphosphate (HMBPP) into a mixture of isopentenyl diphosphate (IPP) and dimethylallyl diphosphate (DMAPP). Acts in the terminal step of the DOXP/MEP pathway for isoprenoid precursor biosynthesis. The sequence is that of 4-hydroxy-3-methylbut-2-enyl diphosphate reductase from Geobacter metallireducens (strain ATCC 53774 / DSM 7210 / GS-15).